A 353-amino-acid chain; its full sequence is Histidine biosynthesis bifunctional protein HisB (353 aa).

The histidinol-phosphatase stretch occupies residues 1 to 164 (MKNKILFIDR…HITKYIIKHN (164 aa)). Catalysis depends on Asp-9, which acts as the Nucleophile. Mg(2+) is bound by residues Asp-9 and Asp-11. Asp-11 acts as the Proton donor in catalysis. Residues Cys-93, His-95, Cys-101, and Cys-103 each contribute to the Zn(2+) site. Asp-128 is a binding site for Mg(2+). The interval 165–353 (RYAEIIRRTK…NMLPTSKGIL (189 aa)) is imidazoleglycerol-phosphate dehydratase.

It in the N-terminal section; belongs to the histidinol-phosphatase family. In the C-terminal section; belongs to the imidazoleglycerol-phosphate dehydratase family. It depends on Mg(2+) as a cofactor. Zn(2+) is required as a cofactor.

It is found in the cytoplasm. It carries out the reaction D-erythro-1-(imidazol-4-yl)glycerol 3-phosphate = 3-(imidazol-4-yl)-2-oxopropyl phosphate + H2O. The enzyme catalyses L-histidinol phosphate + H2O = L-histidinol + phosphate. It participates in amino-acid biosynthesis; L-histidine biosynthesis; L-histidine from 5-phospho-alpha-D-ribose 1-diphosphate: step 6/9. Its pathway is amino-acid biosynthesis; L-histidine biosynthesis; L-histidine from 5-phospho-alpha-D-ribose 1-diphosphate: step 8/9. This chain is Histidine biosynthesis bifunctional protein HisB, found in Buchnera aphidicola subsp. Acyrthosiphon pisum (strain Tuc7).